A 483-amino-acid chain; its full sequence is Regulatory protein ViaA (483 aa).

This sequence belongs to the ViaA family. As to quaternary structure, homodimer. Interacts with RavA.

It localises to the cytoplasm. In terms of biological role, component of the RavA-ViaA chaperone complex, which may act on the membrane to optimize the function of some of the respiratory chains. ViaA stimulates the ATPase activity of RavA. In Shigella sonnei (strain Ss046), this protein is Regulatory protein ViaA.